A 181-amino-acid chain; its full sequence is Large ribosomal subunit protein uL6 (181 aa).

This sequence belongs to the universal ribosomal protein uL6 family. As to quaternary structure, part of the 50S ribosomal subunit.

Functionally, this protein binds to the 23S rRNA, and is important in its secondary structure. It is located near the subunit interface in the base of the L7/L12 stalk, and near the tRNA binding site of the peptidyltransferase center. This is Large ribosomal subunit protein uL6 from Ruthia magnifica subsp. Calyptogena magnifica.